Consider the following 542-residue polypeptide: FACT complex subunit POB3 (542 aa).

Residues 458-542 (RVKNEEKETQ…DRPSKKAKLA (85 aa)) are disordered. Acidic residues-rich tracts occupy residues 477–514 (DSEDEDVNMGSAAEDDESVDEDFQAESEDDDVAEEFDS) and 521–530 (SETEAADGAD).

Belongs to the SSRP1 family. In terms of assembly, forms a stable heterodimer with SPT16. The SPT16-POB3 dimer weakly associates with multiple molecules of NHP6 to form the FACT complex.

It localises to the nucleus. The protein resides in the chromosome. Component of the FACT complex, a general chromatin factor that acts to reorganize nucleosomes. The FACT complex is involved in multiple processes that require DNA as a template such as mRNA elongation, DNA replication and DNA repair. During transcription elongation the FACT complex acts as a histone chaperone that both destabilizes and restores nucleosomal structure. It facilitates the passage of RNA polymerase II and transcription by promoting the dissociation of one histone H2A-H2B dimer from the nucleosome, then subsequently promotes the reestablishment of the nucleosome following the passage of RNA polymerase II. The sequence is that of FACT complex subunit POB3 (POB3) from Eremothecium gossypii (strain ATCC 10895 / CBS 109.51 / FGSC 9923 / NRRL Y-1056) (Yeast).